A 200-amino-acid chain; its full sequence is RNA-binding protein with multiple splicing 2 (200 aa).

The RRM domain maps to 22 to 99 (RTLFVSGLPV…QTLRLEFAKA (78 aa)). The segment at 32-42 (DIKPRELYLLF) is important for homodimerization.

As to quaternary structure, homodimer. Expressed in developing heart.

It localises to the cytoplasm. It is found in the nucleus. The protein localises to the stress granule. Its function is as follows. RNA-binding protein involved in the regulation of smooth muscle cell differentiation and proliferation in the gastrointestinal system. Binds NOG mRNA, the major inhibitor of the bone morphogenetic protein (BMP) pathway. Mediates an increase of NOG mRNA levels, thereby contributing to the negative regulation of BMP signaling pathway and promoting reversible dedifferentiation and proliferation of smooth muscle cells. Acts as a pre-mRNA alternative splicing regulator. Mediates ACTN1 and FLNB alternative splicing. Likely binds to mRNA tandem CAC trinucleotide or CA dinucleotide motifs. The sequence is that of RNA-binding protein with multiple splicing 2 from Gallus gallus (Chicken).